The chain runs to 1328 residues: ABC transporter C family member 7 (1328 aa).

The region spanning 104–389 is the ABC transmembrane type-1 1 domain; that stretch reads HKTSIIVQIF…LPQAIQRLLS (286 aa). 6 helical membrane-spanning segments follow: residues 112–132, 140–160, 224–244, 245–265, 287–307, and 333–353; these read IFSAIVSVLSPLCLRAFILYV, SFLVGLFYAVLVLMGALFLSI, LILLVAPIQIIALLALLCWTI, GYSGLVGFLIMILSLPLSTFL, ISEMINGIYLLKLYNWELFFI, and MVVQISSALVLVSSFTVYTLI. Residues 457–678 form the ABC transporter 1 domain; the sequence is IELVNNDSIE…FDFESIMKTK (222 aa). Residue 490 to 497 coordinates ATP; the sequence is GVVGSGKS. Residues 684–695 are compositionally biased toward low complexity; the sequence is LNNSNNNNNNNN. The interval 684 to 708 is disordered; the sequence is LNNSNNNNNNNNNKEEEEDVENLEK. The next 5 membrane-spanning stretches (helical) occupy residues 762–782, 802–822, 894–914, 988–1008, and 1014–1034; these read FIFFFTMIMMYIISQLLFLLF, DSFYILYYLLLVGLFSVFLGI, VLMMIVINPLIVFPFLLLALF, IGIKIEIISSAAVFLSAFFSL, and GLSVLAVTTSLSLTGYLNWCI. The ABC transmembrane type-1 2 domain maps to 765 to 1046; it reads FFTMIMMYII…YIEFSMKMSS (282 aa). In terms of domain architecture, ABC transporter 2 spans 1083-1316; sequence IQFKNVEIKY…INNQNSKFKK (234 aa). 1117–1124 provides a ligand contact to ATP; sequence GKSGSGKS.

Belongs to the ABC transporter superfamily. ABCC family. Conjugate transporter (TC 3.A.1.208) subfamily.

Its subcellular location is the membrane. The sequence is that of ABC transporter C family member 7 (abcC7) from Dictyostelium discoideum (Social amoeba).